Consider the following 175-residue polypeptide: Large ribosomal subunit protein uL10 (175 aa).

Belongs to the universal ribosomal protein uL10 family. As to quaternary structure, part of the ribosomal stalk of the 50S ribosomal subunit. The N-terminus interacts with L11 and the large rRNA to form the base of the stalk. The C-terminus forms an elongated spine to which L12 dimers bind in a sequential fashion forming a multimeric L10(L12)X complex.

Forms part of the ribosomal stalk, playing a central role in the interaction of the ribosome with GTP-bound translation factors. The chain is Large ribosomal subunit protein uL10 from Synechococcus sp. (strain CC9311).